The chain runs to 332 residues: Glycerol-3-phosphate dehydrogenase [NAD(P)+] (332 aa).

Residues Trp13, Lys34, and Lys108 each contribute to the NADPH site. Sn-glycerol 3-phosphate is bound by residues Lys108, Gly136, and Ser138. Residue Ala140 participates in NADPH binding. Residues Lys191, Asp244, Ser254, Arg255, and Asn256 each coordinate sn-glycerol 3-phosphate. Lys191 (proton acceptor) is an active-site residue. NADPH is bound at residue Arg255. The NADPH site is built by Val279 and Glu281.

The protein belongs to the NAD-dependent glycerol-3-phosphate dehydrogenase family.

It localises to the cytoplasm. It catalyses the reaction sn-glycerol 3-phosphate + NAD(+) = dihydroxyacetone phosphate + NADH + H(+). The catalysed reaction is sn-glycerol 3-phosphate + NADP(+) = dihydroxyacetone phosphate + NADPH + H(+). The protein operates within membrane lipid metabolism; glycerophospholipid metabolism. In terms of biological role, catalyzes the reduction of the glycolytic intermediate dihydroxyacetone phosphate (DHAP) to sn-glycerol 3-phosphate (G3P), the key precursor for phospholipid synthesis. This is Glycerol-3-phosphate dehydrogenase [NAD(P)+] from Francisella tularensis subsp. holarctica (strain FTNF002-00 / FTA).